Reading from the N-terminus, the 279-residue chain is Cholesterol 25-hydroxylase-like protein 2 (279 aa).

N-linked (GlcNAc...) asparagine glycans are attached at residues Asn-6 and Asn-13. A run of 3 transmembrane segments spans residues 36 to 56, 86 to 106, and 120 to 140; these read LFPV…YTVL, LALT…AQWL, and LTAF…QYYL. The Fatty acid hydroxylase domain occupies 128–262; it reads VGCTVVFDFQ…FAHWDWLGGT (135 aa). Positions 141–145 match the Histidine box-1 motif; it reads WHLLH. The Histidine box-2 motif lies at 156-160; the sequence is HALHH. Transmembrane regions follow at residues 165–185 and 189–209; these read TFSL…GFWT and PLLL…NIWV. The Histidine box-3 signature appears at 237–243; that stretch reads RHDAHHQ.

This sequence belongs to the sterol desaturase family. It depends on Fe cation as a cofactor.

It is found in the endoplasmic reticulum membrane. Its function is as follows. May catalyze the formation of 25-hydroxycholesterol from cholesterol. In Danio rerio (Zebrafish), this protein is Cholesterol 25-hydroxylase-like protein 2.